The following is a 156-amino-acid chain: Endoribonuclease YbeY (156 aa).

Residues histidine 122, histidine 126, and histidine 132 each coordinate Zn(2+).

The protein belongs to the endoribonuclease YbeY family. It depends on Zn(2+) as a cofactor.

The protein localises to the cytoplasm. Single strand-specific metallo-endoribonuclease involved in late-stage 70S ribosome quality control and in maturation of the 3' terminus of the 16S rRNA. The chain is Endoribonuclease YbeY from Syntrophomonas wolfei subsp. wolfei (strain DSM 2245B / Goettingen).